Here is a 569-residue protein sequence, read N- to C-terminus: Falcipain-1 (569 aa).

At 1–35 (MVAIKEMKEFAFARPSLVETLNKKKKFLKKKEKRT) the chain is on the cytoplasmic side. A propeptide spans 1-332 (MVAIKEMKEF…KRNEKDIFSK (332 aa)) (activation peptide). A helical; Signal-anchor for type II membrane protein membrane pass occupies residues 36-56 (FVLSIYAFITFIIFCIGILYF). Over 57 to 569 (TNKSSAHNNN…IGEEVFYPIL (513 aa)) the chain is Lumenal. 4 N-linked (GlcNAc...) asparagine glycosylation sites follow: asparagine 58, asparagine 98, asparagine 121, and asparagine 127. The disordered stretch occupies residues 97–118 (LNESSNEEDEEKYTLNSETYNN). 3 disulfides stabilise this stretch: cysteine 354–cysteine 395, cysteine 388–cysteine 428, and cysteine 413–cysteine 433. The active site involves cysteine 357. N-linked (GlcNAc...) asparagine glycosylation is found at asparagine 479 and asparagine 487. Cysteine 482 and cysteine 558 form a disulfide bridge. Residues histidine 488 and asparagine 533 contribute to the active site.

Belongs to the peptidase C1 family. In terms of processing, contains disulfide bonds.

The protein resides in the membrane. The protein localises to the cytoplasmic granule. In terms of biological role, cysteine protease. In the mosquito midgut, required for parasite development. This is Falcipain-1 from Plasmodium falciparum (isolate 3D7).